Consider the following 636-residue polypeptide: Nuclear receptor subfamily 2 group C member 1 (636 aa).

Positions 149–224 form a DNA-binding region, nuclear receptor; sequence VELCVVCGDK…LGMKQDSVQC (76 aa). 2 consecutive NR C4-type zinc fingers follow at residues 152–172 and 188–207; these read CVVC…CEGC and CRGS…CQYC. Residues 382 to 623 enclose the NR LBD domain; it reads ECVGSNSNLT…SIIPYILRME (242 aa).

This sequence belongs to the nuclear hormone receptor family. NR2 subfamily.

The protein localises to the nucleus. In terms of biological role, orphan nuclear receptor. Binds the IR7 element in the promoter of its own gene in an autoregulatory negative feedback mechanism. Primarily repressor of a broad range of genes. Binds to hormone response elements (HREs) consisting of two 5'-AGGTCA-3' half site direct repeat consensus sequences. This is Nuclear receptor subfamily 2 group C member 1 from Xenopus tropicalis (Western clawed frog).